Consider the following 980-residue polypeptide: Valine--tRNA ligase (980 aa).

The segment at 1–40 is disordered; the sequence is MADKGCEAAQSKDSSAPGSGEPRPKTEKELERERQKAAKL. Residues 22-40 are compositionally biased toward basic and acidic residues; that stretch reads PRPKTEKELERERQKAAKL. Residues 139–149 carry the 'HIGH' region motif; it reads PNVTGALHIGH. Residues 652-656 carry the 'KMSKS' region motif; it reads KMSKS. Residue lysine 655 participates in ATP binding.

This sequence belongs to the class-I aminoacyl-tRNA synthetase family.

The protein localises to the cytoplasm. It carries out the reaction tRNA(Val) + L-valine + ATP = L-valyl-tRNA(Val) + AMP + diphosphate. The polypeptide is Valine--tRNA ligase (vas2) (Schizosaccharomyces pombe (strain 972 / ATCC 24843) (Fission yeast)).